A 193-amino-acid polypeptide reads, in one-letter code: Major intrinsically disordered NOTCH2-binding receptor 1-like homolog (193 aa).

The residue at position 82 (serine 82) is a Phosphoserine. The N-linked (GlcNAc...) asparagine glycan is linked to asparagine 128. The helical transmembrane segment at 172–192 (GLILLLVASILVTIVTLSTIF) threads the bilayer.

Belongs to the MINAR family. As to quaternary structure, interacts with NOTCH2. Widely expressed in the cortex and Purkinje cells of cerebellum. Expressed in the inner ear, mainly in the hair cells, spiral ganglia, the spiral limbus, and the stria vascularis.

The protein resides in the lysosome membrane. It localises to the endoplasmic reticulum membrane. Functionally, binds cholesterol and may regulate the distribution and homeostasis of cholesterol in hair cells. May play a role in angiogenesis. This Mus musculus (Mouse) protein is Major intrinsically disordered NOTCH2-binding receptor 1-like homolog.